The following is a 125-amino-acid chain: Large ribosomal subunit protein uL22c (125 aa).

The protein belongs to the universal ribosomal protein uL22 family. As to quaternary structure, part of the 50S ribosomal subunit.

It is found in the plastid. Its subcellular location is the chloroplast. In terms of biological role, this protein binds specifically to 23S rRNA. Its function is as follows. The globular domain of the protein is located near the polypeptide exit tunnel on the outside of the subunit, while an extended beta-hairpin is found that lines the wall of the exit tunnel in the center of the 70S ribosome. In Huperzia lucidula (Shining clubmoss), this protein is Large ribosomal subunit protein uL22c (rpl22).